We begin with the raw amino-acid sequence, 213 residues long: MEQYKYDFIEFALSRNVLKFGEFTLKSGRISPYFFNAGLFNTGRDLAKLGEYYATAIQASQIEYDVLFGPAYKGIPIATTVAVALANQFAIDKPCCFNRKEAKTHGEGGQLIGAVLEGKILLVDDVITAGTAIRESMQLIKLNQASLAGVMIALNRQEKGNGELSAIQEVERDYACQVHSIINFDDLVYFIEQSAKHAPYLTKMREYRAKYGV.

Lysine 26 is a 5-phospho-alpha-D-ribose 1-diphosphate binding site. Position 34–35 (34–35 (FF)) interacts with orotate. Residues 72-73 (YK), arginine 99, lysine 100, lysine 103, histidine 105, and 124-132 (DDVITAGTA) each bind 5-phospho-alpha-D-ribose 1-diphosphate. Positions 128 and 156 each coordinate orotate.

This sequence belongs to the purine/pyrimidine phosphoribosyltransferase family. PyrE subfamily. In terms of assembly, homodimer. It depends on Mg(2+) as a cofactor.

It catalyses the reaction orotidine 5'-phosphate + diphosphate = orotate + 5-phospho-alpha-D-ribose 1-diphosphate. It participates in pyrimidine metabolism; UMP biosynthesis via de novo pathway; UMP from orotate: step 1/2. Functionally, catalyzes the transfer of a ribosyl phosphate group from 5-phosphoribose 1-diphosphate to orotate, leading to the formation of orotidine monophosphate (OMP). The protein is Orotate phosphoribosyltransferase of Haemophilus ducreyi (strain 35000HP / ATCC 700724).